Reading from the N-terminus, the 643-residue chain is Long-chain fatty acid transport protein 4 (643 aa).

Helical transmembrane passes span 20–42 and 139–156; these read LPWT…WRFI and FVGL…AALI. Residue 243–254 coordinates AMP; sequence YIYTSGTTGLPK.

This sequence belongs to the ATP-dependent AMP-binding enzyme family.

Its subcellular location is the endoplasmic reticulum membrane. It catalyses the reaction a fatty acid(in) = a fatty acid(out). It carries out the reaction (9Z,12Z)-octadecadienoate(out) = (9Z,12Z)-octadecadienoate(in). The catalysed reaction is (9Z)-octadecenoate(out) = (9Z)-octadecenoate(in). The enzyme catalyses hexadecanoate(out) = hexadecanoate(in). It catalyses the reaction a long-chain fatty acid + ATP + CoA = a long-chain fatty acyl-CoA + AMP + diphosphate. It carries out the reaction (5Z,8Z,11Z,14Z)-eicosatetraenoate + ATP + CoA = (5Z,8Z,11Z,14Z)-eicosatetraenoyl-CoA + AMP + diphosphate. The catalysed reaction is (9Z)-octadecenoate + ATP + CoA = (9Z)-octadecenoyl-CoA + AMP + diphosphate. The enzyme catalyses hexadecanoate + ATP + CoA = hexadecanoyl-CoA + AMP + diphosphate. It catalyses the reaction (E)-hexadec-2-enoate + ATP + CoA = (2E)-hexadecenoyl-CoA + AMP + diphosphate. It carries out the reaction a very long-chain fatty acid + ATP + CoA = a very long-chain fatty acyl-CoA + AMP + diphosphate. The catalysed reaction is tetracosanoate + ATP + CoA = tetracosanoyl-CoA + AMP + diphosphate. Mediates the import of long-chain fatty acids (LCFA) into the cell by facilitating their transport across cell membranes. Appears to be the principal fatty acid transporter in small intestinal enterocytes. Also functions as an acyl-CoA ligase catalyzing the ATP-dependent formation of fatty acyl-CoA using LCFA and very-long-chain fatty acids (VLCFA) as substrates, which prevents fatty acid efflux from cells and might drive more fatty acid uptake. Plays a role in the formation of the epidermal barrier. Required for fat absorption in early embryogenesis. Probably involved in fatty acid transport across the blood barrier. Indirectly inhibits RPE65 via substrate competition and via production of VLCFA derivatives like lignoceroyl-CoA. Prevents light-induced degeneration of rods and cones. This is Long-chain fatty acid transport protein 4 (SLC27A4) from Pongo abelii (Sumatran orangutan).